The chain runs to 95 residues: SMAD5 antisense gene protein 1 (95 aa).

Disordered stretches follow at residues 1–24 (MHKQPKLLPPPATPPPPPQSSSWS) and 43–70 (SSPTGLPKPHSPMPSPPEPEHSVGKPAN). The segment covering 7 to 19 (LLPPPATPPPPPQ) has biased composition (pro residues).

As to expression, expressed in fetal tissues.

In Homo sapiens (Human), this protein is SMAD5 antisense gene protein 1 (SMAD5-AS1).